A 239-amino-acid polypeptide reads, in one-letter code: Ribonuclease PH (239 aa).

Phosphate is bound by residues arginine 87 and glycine 125 to arginine 127.

It belongs to the RNase PH family. As to quaternary structure, homohexameric ring arranged as a trimer of dimers.

The enzyme catalyses tRNA(n+1) + phosphate = tRNA(n) + a ribonucleoside 5'-diphosphate. Phosphorolytic 3'-5' exoribonuclease that plays an important role in tRNA 3'-end maturation. Removes nucleotide residues following the 3'-CCA terminus of tRNAs; can also add nucleotides to the ends of RNA molecules by using nucleoside diphosphates as substrates, but this may not be physiologically important. Probably plays a role in initiation of 16S rRNA degradation (leading to ribosome degradation) during starvation. The protein is Ribonuclease PH of Pseudomonas aeruginosa (strain LESB58).